A 94-amino-acid chain; its full sequence is Co-chaperonin GroES (94 aa).

Belongs to the GroES chaperonin family. As to quaternary structure, heptamer of 7 subunits arranged in a ring. Interacts with the chaperonin GroEL.

Its subcellular location is the cytoplasm. Functionally, together with the chaperonin GroEL, plays an essential role in assisting protein folding. The GroEL-GroES system forms a nano-cage that allows encapsulation of the non-native substrate proteins and provides a physical environment optimized to promote and accelerate protein folding. GroES binds to the apical surface of the GroEL ring, thereby capping the opening of the GroEL channel. The protein is Co-chaperonin GroES of Listeria innocua serovar 6a (strain ATCC BAA-680 / CLIP 11262).